The sequence spans 709 residues: Phosphoribosylformylglycinamidine synthase subunit PurL (709 aa).

The active site involves His36. ATP-binding residues include Tyr39 and Lys80. Glu82 is a binding site for Mg(2+). Substrate is bound by residues 83-86 and Arg105; that span reads SHNH. The Proton acceptor role is filled by His84. Position 106 (Asp106) interacts with Mg(2+). Gln226 contributes to the substrate binding site. Asp252 is a Mg(2+) binding site. 294–296 serves as a coordination point for substrate; the sequence is ETQ. ATP is bound by residues Asp470 and Gly507. Position 510 (Ser510) interacts with substrate.

The protein belongs to the FGAMS family. In terms of assembly, monomer. Part of the FGAM synthase complex composed of 1 PurL, 1 PurQ and 2 PurS subunits.

It is found in the cytoplasm. The catalysed reaction is N(2)-formyl-N(1)-(5-phospho-beta-D-ribosyl)glycinamide + L-glutamine + ATP + H2O = 2-formamido-N(1)-(5-O-phospho-beta-D-ribosyl)acetamidine + L-glutamate + ADP + phosphate + H(+). It functions in the pathway purine metabolism; IMP biosynthesis via de novo pathway; 5-amino-1-(5-phospho-D-ribosyl)imidazole from N(2)-formyl-N(1)-(5-phospho-D-ribosyl)glycinamide: step 1/2. Functionally, part of the phosphoribosylformylglycinamidine synthase complex involved in the purines biosynthetic pathway. Catalyzes the ATP-dependent conversion of formylglycinamide ribonucleotide (FGAR) and glutamine to yield formylglycinamidine ribonucleotide (FGAM) and glutamate. The FGAM synthase complex is composed of three subunits. PurQ produces an ammonia molecule by converting glutamine to glutamate. PurL transfers the ammonia molecule to FGAR to form FGAM in an ATP-dependent manner. PurS interacts with PurQ and PurL and is thought to assist in the transfer of the ammonia molecule from PurQ to PurL. The sequence is that of Phosphoribosylformylglycinamidine synthase subunit PurL from Saccharolobus islandicus (strain M.14.25 / Kamchatka #1) (Sulfolobus islandicus).